The primary structure comprises 156 residues: Cyanate hydratase (156 aa).

Active-site residues include R96, E99, and S122.

This sequence belongs to the cyanase family.

It catalyses the reaction cyanate + hydrogencarbonate + 3 H(+) = NH4(+) + 2 CO2. Catalyzes the reaction of cyanate with bicarbonate to produce ammonia and carbon dioxide. This chain is Cyanate hydratase, found in Serratia proteamaculans (strain 568).